A 92-amino-acid polypeptide reads, in one-letter code: Larval cuticle protein 9 (92 aa).

A signal peptide spans 1–16 (MKFVIVLACLLAVVFA). The Chitin-binding type R&amp;R domain occupies 31–92 (LLDFNYAYEL…TGYHPKVVEA (62 aa)).

Its function is as follows. Component of the cuticle of the larva. This is Larval cuticle protein 9 (Lcp9) from Drosophila melanogaster (Fruit fly).